A 617-amino-acid polypeptide reads, in one-letter code: Proline--tRNA ligase (617 aa).

The protein belongs to the class-II aminoacyl-tRNA synthetase family. ProS type 1 subfamily. In terms of assembly, homodimer.

It localises to the cytoplasm. The catalysed reaction is tRNA(Pro) + L-proline + ATP = L-prolyl-tRNA(Pro) + AMP + diphosphate. Catalyzes the attachment of proline to tRNA(Pro) in a two-step reaction: proline is first activated by ATP to form Pro-AMP and then transferred to the acceptor end of tRNA(Pro). As ProRS can inadvertently accommodate and process non-cognate amino acids such as alanine and cysteine, to avoid such errors it has two additional distinct editing activities against alanine. One activity is designated as 'pretransfer' editing and involves the tRNA(Pro)-independent hydrolysis of activated Ala-AMP. The other activity is designated 'posttransfer' editing and involves deacylation of mischarged Ala-tRNA(Pro). The misacylated Cys-tRNA(Pro) is not edited by ProRS. This Streptococcus agalactiae serotype V (strain ATCC BAA-611 / 2603 V/R) protein is Proline--tRNA ligase.